The sequence spans 374 residues: C-C chemokine receptor type 6 (374 aa).

Residues 1–47 (MSGESMNFSDVFDSSEDYFVSVNTSYYSVDSEMLLCSLQEVRQFSRL) are Extracellular-facing. 2 N-linked (GlcNAc...) asparagine glycosylation sites follow: Asn-7 and Asn-23. A helical transmembrane segment spans residues 48–74 (FVPIAYSLICVFGLLGNILVVITFAFY). The Cytoplasmic portion of the chain corresponds to 75-83 (KKARSMTDV). The helical transmembrane segment at 84–104 (YLLNMAIADILFVLTLPFWAV) threads the bilayer. Residues 105–119 (SHATGAWVFSNATCK) lie on the Extracellular side of the membrane. Cys-118 and Cys-197 form a disulfide bridge. A helical transmembrane segment spans residues 120 to 141 (LLKGIYAINFNCGMLLLTCISM). The Cytoplasmic portion of the chain corresponds to 142–159 (DRYIAIVQATKSFRLRSR). The helical transmembrane segment at 160 to 180 (TLPRSKIICLVVWGLSVIISS) threads the bilayer. The Extracellular portion of the chain corresponds to 181-211 (STFVFNQKYNTQGSDVCEPKYQTVSEPIRWK). A helical membrane pass occupies residues 212–238 (LLMLGLELLFGFFIPLMFMIFCYTFIV). The Cytoplasmic segment spans residues 239 to 254 (KTLVQAQNSKRHKAIR). A helical membrane pass occupies residues 255-279 (VIIAVVLVFLACQIPHNMVLLVTAA). The Extracellular segment spans residues 280-303 (NLGKMNRSCQSEKLIGYTKTVTEV). A helical transmembrane segment spans residues 304-321 (LAFLHCCLNPVLYAFIGQ). The Cytoplasmic segment spans residues 322–374 (KFRNYFLKILKDLWCVRRKYKSSGFSCAGRYSENISRQTSETADNDNASSFTM).

It belongs to the G-protein coupled receptor 1 family. Sperm. Mainly localized in the tail and in the postacrosomal region but is also found in the midpiece and basal region in a small percentage of sperm cells. Reduced levels found in the sperms of asthenozoospermia and leukocytospermia patients (at protein level). Spleen, lymph nodes, appendix, and fetal liver. Expressed in lymphocytes, T-cells and B-cells but not in natural killer cells, monocytes or granulocytes.

It localises to the cell membrane. It is found in the cell surface. Its function is as follows. Receptor for the C-C type chemokine CCL20. Binds to CCL20 and subsequently transduces a signal by increasing the intracellular calcium ion levels. Although CCL20 is its major ligand it can also act as a receptor for non-chemokine ligands such as beta-defensins. Binds to defensin DEFB1 leading to increase in intracellular calcium ions and cAMP levels. Its binding to DEFB1 is essential for the function of DEFB1 in regulating sperm motility and bactericidal activity. Binds to defensins DEFB4 and DEFB4A/B and mediates their chemotactic effects. The ligand-receptor pair CCL20-CCR6 is responsible for the chemotaxis of dendritic cells (DC), effector/ memory T-cells and B-cells and plays an important role at skin and mucosal surfaces under homeostatic and inflammatory conditions, as well as in pathology, including cancer and various autoimmune diseases. CCR6-mediated signals are essential for immune responses to microbes in the intestinal mucosa and in the modulation of inflammatory responses initiated by tissue insult and trauma. CCR6 is essential for the recruitment of both the pro-inflammatory IL17 producing helper T-cells (Th17) and the regulatory T-cells (Treg) to sites of inflammation. Required for the normal migration of Th17 cells in Peyers-patches and other related tissue sites of the intestine and plays a role in regulating effector T-cell balance and distribution in inflamed intestine. Plays an important role in the coordination of early thymocyte precursor migration events important for normal subsequent thymocyte precursor development, but is not required for the formation of normal thymic natural regulatory T-cells (nTregs). Required for optimal differentiation of DN2 and DN3 thymocyte precursors. Essential for B-cell localization in the subepithelial dome of Peyers-patches and for efficient B-cell isotype switching to IgA in the Peyers-patches. Essential for appropriate anatomical distribution of memory B-cells in the spleen and for the secondary recall response of memory B-cells. Positively regulates sperm motility and chemotaxis via its binding to CCL20. The polypeptide is C-C chemokine receptor type 6 (CCR6) (Homo sapiens (Human)).